The chain runs to 633 residues: Phosphomethylpyrimidine synthase (633 aa).

Residues Asn245, Met274, Tyr303, His339, Ser359 to Gly361, Asp400 to Arg403, and Glu439 contribute to the substrate site. A Zn(2+)-binding site is contributed by His443. Tyr466 is a binding site for substrate. A Zn(2+)-binding site is contributed by His507. [4Fe-4S] cluster is bound by residues Cys587, Cys590, and Cys595.

The protein belongs to the ThiC family. Homodimer. It depends on [4Fe-4S] cluster as a cofactor.

It catalyses the reaction 5-amino-1-(5-phospho-beta-D-ribosyl)imidazole + S-adenosyl-L-methionine = 4-amino-2-methyl-5-(phosphooxymethyl)pyrimidine + CO + 5'-deoxyadenosine + formate + L-methionine + 3 H(+). It functions in the pathway cofactor biosynthesis; thiamine diphosphate biosynthesis. Functionally, catalyzes the synthesis of the hydroxymethylpyrimidine phosphate (HMP-P) moiety of thiamine from aminoimidazole ribotide (AIR) in a radical S-adenosyl-L-methionine (SAM)-dependent reaction. In Neisseria gonorrhoeae (strain ATCC 700825 / FA 1090), this protein is Phosphomethylpyrimidine synthase.